Reading from the N-terminus, the 293-residue chain is Large ribosomal subunit protein uL4 (293 aa).

Basic and acidic residues-rich tracts occupy residues 1–14 and 33–55; these read MAEE…EKTP and KTTE…ESTK. 2 disordered regions span residues 1–72 and 130–166; these read MAEE…IKSE and QRQG…STRS.

This sequence belongs to the universal ribosomal protein uL4 family. As to quaternary structure, part of the 50S ribosomal subunit.

Functionally, one of the primary rRNA binding proteins, this protein initially binds near the 5'-end of the 23S rRNA. It is important during the early stages of 50S assembly. It makes multiple contacts with different domains of the 23S rRNA in the assembled 50S subunit and ribosome. Forms part of the polypeptide exit tunnel. The chain is Large ribosomal subunit protein uL4 from Mycoplasma mobile (strain ATCC 43663 / 163K / NCTC 11711) (Mesomycoplasma mobile).